The chain runs to 137 residues: Large ribosomal subunit protein uL16 (137 aa).

Belongs to the universal ribosomal protein uL16 family. In terms of assembly, part of the 50S ribosomal subunit.

Binds 23S rRNA and is also seen to make contacts with the A and possibly P site tRNAs. This chain is Large ribosomal subunit protein uL16, found in Alkalilimnicola ehrlichii (strain ATCC BAA-1101 / DSM 17681 / MLHE-1).